We begin with the raw amino-acid sequence, 122 residues long: Small ribosomal subunit protein uS13 (122 aa).

A disordered region spans residues K94–K122.

This sequence belongs to the universal ribosomal protein uS13 family. Part of the 30S ribosomal subunit. Forms a loose heterodimer with protein S19. Forms two bridges to the 50S subunit in the 70S ribosome.

Located at the top of the head of the 30S subunit, it contacts several helices of the 16S rRNA. In the 70S ribosome it contacts the 23S rRNA (bridge B1a) and protein L5 of the 50S subunit (bridge B1b), connecting the 2 subunits; these bridges are implicated in subunit movement. Contacts the tRNAs in the A and P-sites. This is Small ribosomal subunit protein uS13 from Methylorubrum populi (strain ATCC BAA-705 / NCIMB 13946 / BJ001) (Methylobacterium populi).